A 545-amino-acid polypeptide reads, in one-letter code: CTP synthase (545 aa).

Positions 1 to 265 (MSKYIFVTGG…LVPIAKQLDL (265 aa)) are amidoligase domain. Ser13 provides a ligand contact to CTP. Ser13 is a UTP binding site. ATP is bound by residues 14–19 (SLGKGI) and Asp71. Positions 71 and 139 each coordinate Mg(2+). Residues 146-148 (DIE), 186-191 (KTKPTQ), and Lys222 each bind CTP. UTP contacts are provided by residues 186–191 (KTKPTQ) and Lys222. Positions 290–544 (KIAFVGKYLQ…VENAYKCQRS (255 aa)) constitute a Glutamine amidotransferase type-1 domain. Gly355 serves as a coordination point for L-glutamine. Catalysis depends on Cys382, which acts as the Nucleophile; for glutamine hydrolysis. L-glutamine contacts are provided by residues 383-386 (LGMQ), Glu406, and Arg473. Catalysis depends on residues His517 and Glu519.

Belongs to the CTP synthase family. Homotetramer.

The enzyme catalyses UTP + L-glutamine + ATP + H2O = CTP + L-glutamate + ADP + phosphate + 2 H(+). It catalyses the reaction L-glutamine + H2O = L-glutamate + NH4(+). The catalysed reaction is UTP + NH4(+) + ATP = CTP + ADP + phosphate + 2 H(+). Its pathway is pyrimidine metabolism; CTP biosynthesis via de novo pathway; CTP from UDP: step 2/2. Its activity is regulated as follows. Allosterically activated by GTP, when glutamine is the substrate; GTP has no effect on the reaction when ammonia is the substrate. The allosteric effector GTP functions by stabilizing the protein conformation that binds the tetrahedral intermediate(s) formed during glutamine hydrolysis. Inhibited by the product CTP, via allosteric rather than competitive inhibition. In terms of biological role, catalyzes the ATP-dependent amination of UTP to CTP with either L-glutamine or ammonia as the source of nitrogen. Regulates intracellular CTP levels through interactions with the four ribonucleotide triphosphates. The sequence is that of CTP synthase from Nautilia profundicola (strain ATCC BAA-1463 / DSM 18972 / AmH).